The following is a 137-amino-acid chain: Nucleoside diphosphate kinase (137 aa).

ATP is bound by residues Lys9, Phe57, Arg85, Thr91, Arg102, and Asn112. The Pros-phosphohistidine intermediate role is filled by His115.

This sequence belongs to the NDK family. As to quaternary structure, homotetramer. It depends on Mg(2+) as a cofactor.

The protein localises to the cytoplasm. It catalyses the reaction a 2'-deoxyribonucleoside 5'-diphosphate + ATP = a 2'-deoxyribonucleoside 5'-triphosphate + ADP. The catalysed reaction is a ribonucleoside 5'-diphosphate + ATP = a ribonucleoside 5'-triphosphate + ADP. Its function is as follows. Major role in the synthesis of nucleoside triphosphates other than ATP. The ATP gamma phosphate is transferred to the NDP beta phosphate via a ping-pong mechanism, using a phosphorylated active-site intermediate. In Campylobacter fetus subsp. fetus (strain 82-40), this protein is Nucleoside diphosphate kinase.